A 185-amino-acid chain; its full sequence is Ribosome-recycling factor (185 aa).

The protein belongs to the RRF family.

Its subcellular location is the cytoplasm. Responsible for the release of ribosomes from messenger RNA at the termination of protein biosynthesis. May increase the efficiency of translation by recycling ribosomes from one round of translation to another. The polypeptide is Ribosome-recycling factor (Campylobacter lari (strain RM2100 / D67 / ATCC BAA-1060)).